The following is a 331-amino-acid chain: 6-phosphogluconolactonase (331 aa).

This sequence belongs to the cycloisomerase 2 family.

It catalyses the reaction 6-phospho-D-glucono-1,5-lactone + H2O = 6-phospho-D-gluconate + H(+). The protein operates within carbohydrate degradation; pentose phosphate pathway; D-ribulose 5-phosphate from D-glucose 6-phosphate (oxidative stage): step 2/3. In terms of biological role, catalyzes the hydrolysis of 6-phosphogluconolactone to 6-phosphogluconate. The sequence is that of 6-phosphogluconolactonase from Buchnera aphidicola subsp. Baizongia pistaciae (strain Bp).